A 360-amino-acid polypeptide reads, in one-letter code: Sphingolipid delta(4)-desaturase (360 aa).

The next 3 membrane-spanning stretches (helical) occupy residues 67–87 (AVVL…VLSF), 89–109 (FLAL…LCIH), and 125–145 (LFAI…FQPY). The Histidine box-1 signature appears at 109–113 (HELSH). Positions 146–150 (HQLHH) match the Histidine box-2 motif. 3 helical membrane passes run 170-190 (VLSS…FYAL), 202-222 (FIHL…IKFG), and 228-248 (WYLI…GHFI). The short motif at 288–292 (HNEHH) is the Histidine box-3 element.

This sequence belongs to the fatty acid desaturase type 1 family. DEGS subfamily.

The protein resides in the membrane. The catalysed reaction is an N-acylsphinganine + 2 Fe(II)-[cytochrome b5] + O2 + 2 H(+) = an N-acylsphing-4-enine + 2 Fe(III)-[cytochrome b5] + 2 H2O. It participates in lipid metabolism; sphingolipid metabolism. In terms of biological role, delta(4)-fatty-acid desaturase which introduces a double bond at the 4-position in the long-chain base (LCB) of ceramides. Required for the formation of the monounsaturated sphingoid base (E)-sphing-4-enine during glucosylceramide (GluCer) biosynthesis. This Komagataella phaffii (strain GS115 / ATCC 20864) (Yeast) protein is Sphingolipid delta(4)-desaturase.